We begin with the raw amino-acid sequence, 255 residues long: Type III pantothenate kinase (255 aa).

6-13 (DIGNTNIV) is a binding site for ATP. Position 107-110 (107-110 (GSDC)) interacts with substrate. The active-site Proton acceptor is the D109. D129 is a K(+) binding site. T132 provides a ligand contact to ATP. T184 provides a ligand contact to substrate.

The protein belongs to the type III pantothenate kinase family. As to quaternary structure, homodimer. The cofactor is NH4(+). K(+) serves as cofactor.

The protein localises to the cytoplasm. It catalyses the reaction (R)-pantothenate + ATP = (R)-4'-phosphopantothenate + ADP + H(+). It functions in the pathway cofactor biosynthesis; coenzyme A biosynthesis; CoA from (R)-pantothenate: step 1/5. Catalyzes the phosphorylation of pantothenate (Pan), the first step in CoA biosynthesis. In Bifidobacterium longum subsp. infantis (strain ATCC 15697 / DSM 20088 / JCM 1222 / NCTC 11817 / S12), this protein is Type III pantothenate kinase.